Consider the following 505-residue polypeptide: AMP phosphorylase (505 aa).

AMP contacts are provided by residues G170, 196 to 201, and T205; that span reads SRAITS. The Proton donor role is filled by D258. Residues S266 and K290 each coordinate AMP.

The protein belongs to the thymidine/pyrimidine-nucleoside phosphorylase family. Type 2 subfamily.

The enzyme catalyses AMP + phosphate = alpha-D-ribose 1,5-bisphosphate + adenine. It catalyses the reaction CMP + phosphate = cytosine + alpha-D-ribose 1,5-bisphosphate. It carries out the reaction UMP + phosphate = alpha-D-ribose 1,5-bisphosphate + uracil. Its function is as follows. Catalyzes the conversion of AMP and phosphate to adenine and ribose 1,5-bisphosphate (R15P). Exhibits phosphorylase activity toward CMP and UMP in addition to AMP. Functions in an archaeal AMP degradation pathway, together with R15P isomerase and RubisCO. The polypeptide is AMP phosphorylase (Methanococcus maripaludis (strain C6 / ATCC BAA-1332)).